Here is a 227-residue protein sequence, read N- to C-terminus: Orotidine 5'-phosphate decarboxylase (227 aa).

Substrate contacts are provided by residues aspartate 8, lysine 30, 58–67, threonine 117, arginine 177, glutamine 186, glycine 206, and arginine 207; that span reads DLKLYDIPNT. The Proton donor role is filled by lysine 60.

This sequence belongs to the OMP decarboxylase family. Type 1 subfamily. As to quaternary structure, homodimer.

It catalyses the reaction orotidine 5'-phosphate + H(+) = UMP + CO2. Its pathway is pyrimidine metabolism; UMP biosynthesis via de novo pathway; UMP from orotate: step 2/2. In terms of biological role, catalyzes the decarboxylation of orotidine 5'-monophosphate (OMP) to uridine 5'-monophosphate (UMP). In Campylobacter lari (strain RM2100 / D67 / ATCC BAA-1060), this protein is Orotidine 5'-phosphate decarboxylase.